The chain runs to 950 residues: Zinc finger CCCH domain-containing protein 3 (950 aa).

4 disordered regions span residues 32–106 (GNSS…HPEP), 127–182 (IKPP…TKVG), 201–220 (VVKS…RTVS), and 314–489 (SEKS…VLRK). Over residues 56–74 (RPSRRGFSSHHGPSWRKKY) the composition is skewed to basic residues. Polar residues predominate over residues 76 to 96 (LVNQPVESSDPASDPAFQTSL). Residues 327–338 (PRTTLESGNKAT) are compositionally biased toward polar residues. The span at 344–360 (KTEKPQPKVDPEVRPEK) shows a compositional bias: basic and acidic residues. The segment covering 370–388 (SPSKYKWKASSPSASSSSS) has biased composition (low complexity). The span at 402 to 412 (SQLSPVPSRPT) shows a compositional bias: polar residues. Serine 405 is subject to Phosphoserine. Over residues 438-449 (VKSRTKIIRRRG) the composition is skewed to basic residues. Polar residues predominate over residues 460–470 (SPTTATTSKNH). 5 consecutive C3H1-type zinc fingers follow at residues 662 to 690 (EKKR…HDPE), 694 to 717 (VCTR…HHVS), 718 to 744 (KEKM…HVYV), 745 to 772 (SRKA…HTLL), and 773 to 795 (CPDF…HRNQ). Residues 793–950 (RNQKRHGRRT…GKPLHIKPRL (158 aa)) are disordered. Positions 828-838 (PTTTQRSVRQM) are enriched in polar residues. Low complexity predominate over residues 839 to 849 (SSGLASGAEAP). Phosphoserine is present on residues serine 851 and serine 855. Residues 857–888 (RVLASTSTLSSKATAASSPSPSPSTSSPAPSL) show a composition bias toward low complexity. The span at 914–928 (SLHSSPSPGGQTETG) shows a compositional bias: polar residues. Phosphoserine is present on residues serine 918, serine 920, and serine 934.

Interacts with SMAD1, SMAD3, SMAD4, CPSF2 and CPSF3.

It localises to the nucleus. Required for the export of polyadenylated mRNAs from the nucleus. Enhances ACVR1B-induced SMAD-dependent transcription. Binds to single-stranded DNA but not to double-stranded DNA in vitro. Involved in RNA cleavage. The protein is Zinc finger CCCH domain-containing protein 3 (Zc3h3) of Mus musculus (Mouse).